The primary structure comprises 277 residues: Putative phosphoenolpyruvate synthase regulatory protein (277 aa).

157-164 (GVSRSGKT) provides a ligand contact to ADP.

The protein belongs to the pyruvate, phosphate/water dikinase regulatory protein family. PSRP subfamily.

It catalyses the reaction [pyruvate, water dikinase] + ADP = [pyruvate, water dikinase]-phosphate + AMP + H(+). The catalysed reaction is [pyruvate, water dikinase]-phosphate + phosphate + H(+) = [pyruvate, water dikinase] + diphosphate. Its function is as follows. Bifunctional serine/threonine kinase and phosphorylase involved in the regulation of the phosphoenolpyruvate synthase (PEPS) by catalyzing its phosphorylation/dephosphorylation. This is Putative phosphoenolpyruvate synthase regulatory protein from Aromatoleum aromaticum (strain DSM 19018 / LMG 30748 / EbN1) (Azoarcus sp. (strain EbN1)).